The primary structure comprises 450 residues: Phosphoglucosamine mutase (450 aa).

The Phosphoserine intermediate role is filled by serine 101. Residues serine 101, aspartate 240, aspartate 242, and aspartate 244 each coordinate Mg(2+). The residue at position 101 (serine 101) is a Phosphoserine.

Belongs to the phosphohexose mutase family. Mg(2+) is required as a cofactor. Post-translationally, activated by phosphorylation.

The catalysed reaction is alpha-D-glucosamine 1-phosphate = D-glucosamine 6-phosphate. Catalyzes the conversion of glucosamine-6-phosphate to glucosamine-1-phosphate. In Streptococcus thermophilus (strain CNRZ 1066), this protein is Phosphoglucosamine mutase.